We begin with the raw amino-acid sequence, 358 residues long: Putative zinc metalloprotease RC0203 (358 aa).

Residue His18 coordinates Zn(2+). Residue Glu19 is part of the active site. His22 lines the Zn(2+) pocket. 4 helical membrane passes run 52 to 71, 97 to 119, 285 to 307, and 332 to 351; these read GVRW…IYGY, FLIV…AGFY, YLLF…IPVL, and ILLQ…AVSN. In terms of domain architecture, PDZ spans 102 to 186; sequence AGPLINYLLA…STLTIERKSE (85 aa).

The protein belongs to the peptidase M50B family. It depends on Zn(2+) as a cofactor.

The protein resides in the cell inner membrane. The protein is Putative zinc metalloprotease RC0203 of Rickettsia conorii (strain ATCC VR-613 / Malish 7).